The primary structure comprises 244 residues: tRNA (guanine-N(1)-)-methyltransferase (244 aa).

S-adenosyl-L-methionine is bound by residues Gly113 and 133 to 138; that span reads IGDYVL.

The protein belongs to the RNA methyltransferase TrmD family. As to quaternary structure, homodimer.

Its subcellular location is the cytoplasm. It carries out the reaction guanosine(37) in tRNA + S-adenosyl-L-methionine = N(1)-methylguanosine(37) in tRNA + S-adenosyl-L-homocysteine + H(+). Specifically methylates guanosine-37 in various tRNAs. The polypeptide is tRNA (guanine-N(1)-)-methyltransferase (Bacillus cereus (strain B4264)).